The primary structure comprises 199 residues: Pre T-cell antigen receptor alpha (199 aa).

The N-terminal stretch at methionine 1–alanine 16 is a signal peptide. Over leucine 17–glutamine 146 the chain is Extracellular. Cysteine 47 and cysteine 107 are oxidised to a cystine. 2 N-linked (GlcNAc...) asparagine glycosylation sites follow: asparagine 67 and asparagine 117. Residues valine 147–leucine 167 form a helical membrane-spanning segment. Over threonine 168–threonine 199 the chain is Cytoplasmic.

In terms of assembly, heterodimer with TCRB; disulfide linked. This heterodimer assembles with CD3 proteins into a signaling-competent pre-T-cell receptor complex. Interacts with RHBDD1. As to expression, isoform 1 is expressed at higher levels than isoform 2 in the thymus while only isoform 2 is expressed in polyclonal beta-only cells. Isoform 1 shows a predominant expression in immature thymocytes.

The protein resides in the membrane. The protein localises to the cell membrane. Component of the pre-T-cell receptor complex (composed of PTCRA, TCRB and the CD3 complex) that plays a crucial role in early T-cell development, particularly alpha-beta T cell differentiation. Isoform 1 acts to retain most TCRB intracellularly, while isoform 2 permits higher levels of cell surface TCRB expression and facilitates signaling from the CD3-TCRB complex. The protein is Pre T-cell antigen receptor alpha of Mus musculus (Mouse).